A 253-amino-acid polypeptide reads, in one-letter code: Sulfate transporter CysZ (253 aa).

4 helical membrane-spanning segments follow: residues 31–51, 75–95, 151–171, and 222–242; these read FVIL…WWLF, LLWP…FSTI, IVLL…PVLW, and IPLL…AMWV.

This sequence belongs to the CysZ family.

It localises to the cell inner membrane. In terms of biological role, high affinity, high specificity proton-dependent sulfate transporter, which mediates sulfate uptake. Provides the sulfur source for the cysteine synthesis pathway. This is Sulfate transporter CysZ from Shigella dysenteriae serotype 1 (strain Sd197).